Reading from the N-terminus, the 342-residue chain is RNA 3'-terminal phosphate cyclase (342 aa).

ATP contacts are provided by residues Q103 and 283-287; that span reads YLADQ. H308 (tele-AMP-histidine intermediate) is an active-site residue.

Belongs to the RNA 3'-terminal cyclase family. Type 1 subfamily.

The protein localises to the cytoplasm. The enzyme catalyses a 3'-end 3'-phospho-ribonucleotide-RNA + ATP = a 3'-end 2',3'-cyclophospho-ribonucleotide-RNA + AMP + diphosphate. Functionally, catalyzes the conversion of 3'-phosphate to a 2',3'-cyclic phosphodiester at the end of RNA. The mechanism of action of the enzyme occurs in 3 steps: (A) adenylation of the enzyme by ATP; (B) transfer of adenylate to an RNA-N3'P to produce RNA-N3'PP5'A; (C) and attack of the adjacent 2'-hydroxyl on the 3'-phosphorus in the diester linkage to produce the cyclic end product. The biological role of this enzyme is unknown but it is likely to function in some aspects of cellular RNA processing. The protein is RNA 3'-terminal phosphate cyclase of Shigella dysenteriae serotype 1 (strain Sd197).